The chain runs to 310 residues: Olfactory receptor 8B8 (310 aa).

Residues 1–27 (MATENASVPEFILAGLTDQPGLRMPLF) are Extracellular-facing. An N-linked (GlcNAc...) asparagine glycan is attached at N5. Residues 28–48 (FLFLGFYMVTMVGNLGLITLI) form a helical membrane-spanning segment. The Cytoplasmic portion of the chain corresponds to 49–55 (GLNSHLH). A helical membrane pass occupies residues 56–76 (TPMYFFLFNLSLIDFCYSTVI). The Extracellular portion of the chain corresponds to 77–98 (TPKMLVSFVSKKNIISYSGCMT). A disulfide bridge links C96 with C188. A helical transmembrane segment spans residues 99-119 (QLFFFLFFVVSESFILSAMAY). Residues 120–140 (DRYVAICNPLMYTVTMSPQVC) are Cytoplasmic-facing. A helical membrane pass occupies residues 141–161 (LLLLLGVYVMGFAGAMAHTAF). Residues 162 to 195 (MVKLTFCADKLVNHYMCDILPLLERSCTSTYVNE) are Extracellular-facing. The chain crosses the membrane as a helical span at residues 196 to 216 (LVVFIVVGIDIGVPTVTIFIS). At 217 to 238 (YALILSSILRISSTEGRSKAFS) the chain is on the cytoplasmic side. The helical transmembrane segment at 239–259 (TCSSHIIAVSLFFGSGAFMYL) threads the bilayer. Residues 260 to 270 (KPSSLLPMNQG) are Extracellular-facing. The helical transmembrane segment at 271–291 (KVSSLFYTIVVPMLNPLIYSL) threads the bilayer. The Cytoplasmic portion of the chain corresponds to 292–310 (RNKDVKVALRKTLSRSSFS).

The protein belongs to the G-protein coupled receptor 1 family.

Its subcellular location is the cell membrane. In terms of biological role, odorant receptor. This Mus musculus (Mouse) protein is Olfactory receptor 8B8.